Consider the following 268-residue polypeptide: Undecaprenyl-diphosphatase 1 (268 aa).

7 helical membrane passes run 5 to 25 (TIVE…IPVS), 43 to 63 (GKAF…SVYF), 81 to 101 (HFVI…ALAH), 107 to 127 (VLFE…VILL), 185 to 205 (AEFS…FDLF), 214 to 234 (ADLP…LFVV), and 248 to 268 (LFGW…MIWG).

Belongs to the UppP family.

Its subcellular location is the cell inner membrane. It catalyses the reaction di-trans,octa-cis-undecaprenyl diphosphate + H2O = di-trans,octa-cis-undecaprenyl phosphate + phosphate + H(+). Catalyzes the dephosphorylation of undecaprenyl diphosphate (UPP). Confers resistance to bacitracin. The protein is Undecaprenyl-diphosphatase 1 of Mesorhizobium japonicum (strain LMG 29417 / CECT 9101 / MAFF 303099) (Mesorhizobium loti (strain MAFF 303099)).